The sequence spans 242 residues: Serine hydrolase cnsH (242 aa).

Residues Ser56, Asp138, and His216 each act as charge relay system in the active site.

The protein belongs to the AB hydrolase 3 family.

Its pathway is alkaloid biosynthesis. In terms of biological role, serine hydrolase; part of the gene cluster that mediates the biosynthesis of communesins, a prominent class of indole alkaloids with great potential as pharmaceuticals. Communesins are biosynthesized by the coupling of tryptamine and aurantioclavine, two building blocks derived from L-tryptophan. The L-tryptophan decarboxylase cnsB converts L-tryptophan to tryptamine, whereas the tryptophan dimethylallyltransferase cnsF converts L-tryptophan to 4-dimethylallyl tryptophan which is further transformed to aurantioclavine by the aurantioclavine synthase cnsA, probably aided by the catalase cnsD. The cytochrome P450 monooxygenase cnsC catalyzes the heterodimeric coupling between the two different indole moieties, tryptamine and aurantioclavine, to construct vicinal quaternary stereocenters and yield the heptacyclic communesin scaffold. The O-methyltransferase cnsE then methylates the communesin scaffold to produce communesin K, the simplest characterized communesin that contains the heptacyclic core. The dioxygenase cnsJ converts communesin K into communesin I. Acylation to introduce the hexadienyl group at position N16 of communesin I by the acyltransferase cnsK leads to the production of communesin B. The hexadienyl group is produced by the highly reducing polyketide synthase cnsI, before being hydrolytically removed from cnsI by the serine hydrolase cnsH, converted into hexadienyl-CoA by the CoA ligase cnsG, and then transferred to communesin I by cnsK. Surprisingly, cnsK may also be a promiscuous acyltransferase that can tolerate a range of acyl groups, including acetyl-, propionyl-, and butyryl-CoA, which lead to communesins A, G and H respectively. The roles of the alpha-ketoglutarate-dependent dioxygenases cnsM and cnsP have still to be determined. This is Serine hydrolase cnsH from Penicillium expansum (Blue mold rot fungus).